Consider the following 613-residue polypeptide: Glutamyl-tRNA(Gln) amidotransferase subunit E (613 aa).

It belongs to the GatB/GatE family. GatE subfamily. As to quaternary structure, heterodimer of GatD and GatE.

It catalyses the reaction L-glutamyl-tRNA(Gln) + L-glutamine + ATP + H2O = L-glutaminyl-tRNA(Gln) + L-glutamate + ADP + phosphate + H(+). Functionally, allows the formation of correctly charged Gln-tRNA(Gln) through the transamidation of misacylated Glu-tRNA(Gln) in organisms which lack glutaminyl-tRNA synthetase. The reaction takes place in the presence of glutamine and ATP through an activated gamma-phospho-Glu-tRNA(Gln). The GatDE system is specific for glutamate and does not act on aspartate. The protein is Glutamyl-tRNA(Gln) amidotransferase subunit E of Archaeoglobus fulgidus (strain ATCC 49558 / DSM 4304 / JCM 9628 / NBRC 100126 / VC-16).